Reading from the N-terminus, the 244-residue chain is tRNA pseudouridine synthase A (244 aa).

Catalysis depends on Asp-52, which acts as the Nucleophile. Tyr-110 serves as a coordination point for substrate.

This sequence belongs to the tRNA pseudouridine synthase TruA family. Homodimer.

The catalysed reaction is uridine(38/39/40) in tRNA = pseudouridine(38/39/40) in tRNA. Its function is as follows. Formation of pseudouridine at positions 38, 39 and 40 in the anticodon stem and loop of transfer RNAs. This Brevibacillus brevis (strain 47 / JCM 6285 / NBRC 100599) protein is tRNA pseudouridine synthase A.